Consider the following 288-residue polypeptide: Mortality factor 4-like protein 2 (288 aa).

A compositionally biased stretch (polar residues) spans 1-15 (MSSRKQASQTRGQQS). Residues 1–115 (MSSRKQASQT…DPTVESEEAF (115 aa)) form a disordered region. Ser71 is subject to Phosphoserine. An MRG domain is found at 117–288 (SRMEVKVKIP…ASADYHRKAL (172 aa)).

Component of the NuA4 histone acetyltransferase complex which contains the catalytic subunit KAT5/TIP60 and the subunits EP400, TRRAP/PAF400, BRD8/SMAP, EPC1, DMAP1/DNMAP1, RUVBL1/TIP49, RUVBL2, ING3, actin, ACTL6A/BAF53A, MORF4L1/MRG15, MORF4L2/MRGX, MRGBP, YEATS4/GAS41 and VPS72/YL1. The NuA4 complex interacts with MYC and the adenovirus E1A protein. MORF4L1 may also participate in the formation of NuA4 related complexes which lack the KAT5/TIP60 catalytic subunit, but which include the SWI/SNF related protein SRCAP. Component of the MSIN3A histone deacetylase complex, which includes SIN3A, HDAC2, ARID4B, MORF4L1, RBBP4/RbAp48, and RBBP7/RbAp46. Interacts with MRFAP1 and RB1. May also interact with one or more as yet undefined members of the TLE (transducin-like enhancer of split) family of transcriptional repressors.

Its subcellular location is the nucleus. Component of the NuA4 histone acetyltransferase complex which is involved in transcriptional activation of select genes principally by acetylation of nucleosomal histone H4 and H2A. This modification may both alter nucleosome - DNA interactions and promote interaction of the modified histones with other proteins which positively regulate transcription. This complex may be required for the activation of transcriptional programs associated with oncogene and proto-oncogene mediated growth induction, tumor suppressor mediated growth arrest and replicative senescence, apoptosis, and DNA repair. The NuA4 complex ATPase and helicase activities seem to be, at least in part, contributed by the association of RUVBL1 and RUVBL2 with EP400. NuA4 may also play a direct role in DNA repair when directly recruited to sites of DNA damage. Also a component of the MSIN3A complex which acts to repress transcription by deacetylation of nucleosomal histones. The polypeptide is Mortality factor 4-like protein 2 (Morf4l2) (Rattus norvegicus (Rat)).